A 158-amino-acid chain; its full sequence is Transcriptional repressor NrdR (158 aa).

A zinc finger lies at 3 to 34 (CPFCGNADTQVVDSRVSEEGDTIRRRRRCLSC). The ATP-cone domain occupies 49-139 (PSVVKRNGSR…VYKNFEDIGE (91 aa)).

It belongs to the NrdR family. Requires Zn(2+) as cofactor.

Its function is as follows. Negatively regulates transcription of bacterial ribonucleotide reductase nrd genes and operons by binding to NrdR-boxes. The polypeptide is Transcriptional repressor NrdR (Bordetella petrii (strain ATCC BAA-461 / DSM 12804 / CCUG 43448)).